The chain runs to 231 residues: 4-hydroxy-tetrahydrodipicolinate reductase (231 aa).

Residues Asp-33, 68–70, and 92–95 contribute to the NAD(+) site; these read CTT and SSNT. Catalysis depends on His-124, which acts as the Proton donor/acceptor. His-125 contributes to the (S)-2,3,4,5-tetrahydrodipicolinate binding site. Catalysis depends on Lys-128, which acts as the Proton donor. 134 to 135 is a (S)-2,3,4,5-tetrahydrodipicolinate binding site; that stretch reads GT.

It belongs to the DapB family.

It is found in the cytoplasm. The enzyme catalyses (S)-2,3,4,5-tetrahydrodipicolinate + NAD(+) + H2O = (2S,4S)-4-hydroxy-2,3,4,5-tetrahydrodipicolinate + NADH + H(+). The catalysed reaction is (S)-2,3,4,5-tetrahydrodipicolinate + NADP(+) + H2O = (2S,4S)-4-hydroxy-2,3,4,5-tetrahydrodipicolinate + NADPH + H(+). The protein operates within amino-acid biosynthesis; L-lysine biosynthesis via DAP pathway; (S)-tetrahydrodipicolinate from L-aspartate: step 4/4. Catalyzes the conversion of 4-hydroxy-tetrahydrodipicolinate (HTPA) to tetrahydrodipicolinate. This chain is 4-hydroxy-tetrahydrodipicolinate reductase, found in Brachyspira hyodysenteriae (strain ATCC 49526 / WA1).